A 447-amino-acid polypeptide reads, in one-letter code: Glutamate--tRNA ligase 2 (447 aa).

The 'HIGH' region signature appears at 8 to 18 (PSPTGYLHVGN). Positions 239–243 (KLSKR) match the 'KMSKS' region motif. Residue Lys242 coordinates ATP.

This sequence belongs to the class-I aminoacyl-tRNA synthetase family. Glutamate--tRNA ligase type 1 subfamily. Monomer.

It localises to the cytoplasm. The catalysed reaction is tRNA(Glu) + L-glutamate + ATP = L-glutamyl-tRNA(Glu) + AMP + diphosphate. Catalyzes the attachment of glutamate to tRNA(Glu) in a two-step reaction: glutamate is first activated by ATP to form Glu-AMP and then transferred to the acceptor end of tRNA(Glu). The protein is Glutamate--tRNA ligase 2 of Granulibacter bethesdensis (strain ATCC BAA-1260 / CGDNIH1).